The chain runs to 416 residues: CinA-like protein (416 aa).

The protein belongs to the CinA family.

This chain is CinA-like protein, found in Syntrophomonas wolfei subsp. wolfei (strain DSM 2245B / Goettingen).